The primary structure comprises 768 residues: DNA ligase (768 aa).

NAD(+) contacts are provided by residues 30–34, 79–80, and glutamate 190; these read DAEYD and SL. Lysine 192 acts as the N6-AMP-lysine intermediate in catalysis. Residues arginine 213, glutamate 250, lysine 367, and lysine 391 each coordinate NAD(+). Zn(2+) contacts are provided by cysteine 485, cysteine 488, cysteine 503, and cysteine 509. The region spanning 678–767 is the BRCT domain; that stretch reads AAEQPLSGLS…IPPEIQARMQ (90 aa).

It belongs to the NAD-dependent DNA ligase family. LigA subfamily. Mg(2+) is required as a cofactor. Mn(2+) serves as cofactor.

It catalyses the reaction NAD(+) + (deoxyribonucleotide)n-3'-hydroxyl + 5'-phospho-(deoxyribonucleotide)m = (deoxyribonucleotide)n+m + AMP + beta-nicotinamide D-nucleotide.. Functionally, DNA ligase that catalyzes the formation of phosphodiester linkages between 5'-phosphoryl and 3'-hydroxyl groups in double-stranded DNA using NAD as a coenzyme and as the energy source for the reaction. It is essential for DNA replication and repair of damaged DNA. This Magnetococcus marinus (strain ATCC BAA-1437 / JCM 17883 / MC-1) protein is DNA ligase.